The sequence spans 193 residues: dCTP deaminase (193 aa).

Residues 110–115, aspartate 128, 136–138, tyrosine 171, lysine 178, and glutamine 182 each bind dCTP; these read RSSLAR and VLE. Residue glutamate 138 is the Proton donor/acceptor of the active site. Residues 169 to 193 are disordered; sequence RPYNRREDAKYRNQQGAVASRIDKD.

This sequence belongs to the dCTP deaminase family. Homotrimer.

It carries out the reaction dCTP + H2O + H(+) = dUTP + NH4(+). It participates in pyrimidine metabolism; dUMP biosynthesis; dUMP from dCTP (dUTP route): step 1/2. Its function is as follows. Catalyzes the deamination of dCTP to dUTP. The sequence is that of dCTP deaminase from Escherichia coli O8 (strain IAI1).